The chain runs to 861 residues: Benzylsuccinate synthase alpha subunit (861 aa).

A PFL domain is found at 40–712 (TERTRRLKAR…QAVGLYMEVG (673 aa)). A disordered region spans residues 718-744 (TPDGRFGGEAADDGGISPYSGTDKKGP). Positions 731–850 (GGISPYSGTD…IIARNEQNFN (120 aa)) constitute a Glycine radical domain. A Glycine radical modification is found at glycine 825.

Belongs to the glycyl radical enzyme (GRE) family. BSS subfamily. As to quaternary structure, heterohexamer composed of 2 alpha subunits, 2 beta subunits and 2 gamma subunits.

It carries out the reaction toluene + fumarate = 2-benzylsuccinate. Its pathway is xenobiotic degradation; toluene degradation. With respect to regulation, activated by the benzylsuccinate synthase activating enzyme BssD. Rapidly inactivated by oxygen. Functionally, catalyzes the addition of fumarate to the methyl group of toluene, leading to the formation of benzylsuccinate. The polypeptide is Benzylsuccinate synthase alpha subunit (bssA) (Thauera aromatica).